We begin with the raw amino-acid sequence, 343 residues long: Ion-translocating oxidoreductase complex subunit D (343 aa).

4 helical membrane-spanning segments follow: residues 24 to 44 (VLLATVPGILALTWLFGAGTL), 45 to 65 (YNLALASLFALAFEAAILAAR), 69 to 91 (LAFFLKDYSALVTAVLLALALPP), and 124 to 144 (AMLGYVVVLISFPVEMTSWPA). Threonine 171 carries the FMN phosphoryl threonine modification. 5 helical membrane passes run 197-217 (FGGAGSEAVNLAFLAGGLYLL), 221-241 (LITWHAPVGMLAALFVMSLLF), 251-271 (GSPLFHLLTGATMLGAFFIVT), 284-304 (LVFGIGVGVLVYVIRAWGGYP), and 305-325 (DAVAFAVLLMNLAAPTIDYYT).

Belongs to the NqrB/RnfD family. As to quaternary structure, the complex is composed of six subunits: RnfA, RnfB, RnfC, RnfD, RnfE and RnfG. FMN is required as a cofactor.

The protein resides in the cell inner membrane. Its function is as follows. Part of a membrane-bound complex that couples electron transfer with translocation of ions across the membrane. This Ectopseudomonas mendocina (strain ymp) (Pseudomonas mendocina) protein is Ion-translocating oxidoreductase complex subunit D.